Consider the following 29-residue polypeptide: Lambda-theraphotoxin-Ec2c (29 aa).

3 disulfides stabilise this stretch: Cys-2/Cys-16, Cys-9/Cys-21, and Cys-15/Cys-25.

The protein belongs to the neurotoxin 30 (phrixotoxin) family. As to expression, expressed by the venom gland.

The protein resides in the secreted. Functionally, both insecticidal and vertebrate neurotoxin that potently blocks insect calcium-activated potassium (BKCa) channels (Slo-type) in cockroach dorsal unpaired median (DUM) neurons (IC(50)=24.6 nM). This occurs in the absence of any shifts in the voltage dependence of activation. May interact with the turret and/or loop region of the external entrance to the channel and does not project deeply into the pore of the channel. Also shows toxicity to mice by introcerebroventicular injection. This is Lambda-theraphotoxin-Ec2c from Eucratoscelus constrictus (African red-rump baboon spider).